A 99-amino-acid polypeptide reads, in one-letter code: Large ribosomal subunit protein bL27 (99 aa).

The propeptide occupies 1 to 9 (MLIMNLQLF).

This sequence belongs to the bacterial ribosomal protein bL27 family. Post-translationally, the N-terminus is cleaved by ribosomal processing cysteine protease Prp.

This Clostridium botulinum (strain Alaska E43 / Type E3) protein is Large ribosomal subunit protein bL27.